The following is a 643-amino-acid chain: Probable extracellular metalloproteinase 4 (643 aa).

Residues 1–18 (MHGLLLAGLLALPLNVLA) form the signal peptide. Positions 19–254 (HPTESHSSGV…VHSVVDYVSA (236 aa)) are excised as a propeptide. The segment covering 47-57 (TKSDAVPKQDG) has biased composition (basic and acidic residues). Residues 47-69 (TKSDAVPKQDGESFTTSSTGDDN) are disordered. A compositionally biased stretch (polar residues) spans 58–69 (ESFTTSSTGDDN). N-linked (GlcNAc...) asparagine glycosylation is found at Asn-271 and Asn-420. Zn(2+) is bound at residue His-437. Glu-438 is a catalytic residue. Zn(2+) is bound at residue His-441. 2 N-linked (GlcNAc...) asparagine glycosylation sites follow: Asn-603 and Asn-629.

Belongs to the peptidase M36 family. It depends on Zn(2+) as a cofactor.

It is found in the secreted. Its function is as follows. Secreted metalloproteinase probably acting as a virulence factor. This is Probable extracellular metalloproteinase 4 (MEP4) from Arthroderma benhamiae (strain ATCC MYA-4681 / CBS 112371) (Trichophyton mentagrophytes).